We begin with the raw amino-acid sequence, 448 residues long: Adenylosuccinate synthetase (448 aa).

GTP is bound by residues 36 to 42 (GDEGKGK) and 64 to 66 (GHT). Asp-37 functions as the Proton acceptor in the catalytic mechanism. Mg(2+) is bound by residues Asp-37 and Gly-64. IMP contacts are provided by residues 37-40 (DEGK), 62-65 (NAGH), Thr-154, Arg-168, Asn-246, Thr-261, and Arg-325. His-65 (proton donor) is an active-site residue. 321–327 (VTTKRKR) is a binding site for substrate. Residues Arg-327, 353–355 (KLD), and 436–438 (GVG) contribute to the GTP site.

It belongs to the adenylosuccinate synthetase family. As to quaternary structure, homodimer. Mg(2+) serves as cofactor.

It is found in the cytoplasm. It carries out the reaction IMP + L-aspartate + GTP = N(6)-(1,2-dicarboxyethyl)-AMP + GDP + phosphate + 2 H(+). Its pathway is purine metabolism; AMP biosynthesis via de novo pathway; AMP from IMP: step 1/2. Plays an important role in the de novo pathway and in the salvage pathway of purine nucleotide biosynthesis. Catalyzes the first committed step in the biosynthesis of AMP from IMP. In Drosophila pseudoobscura pseudoobscura (Fruit fly), this protein is Adenylosuccinate synthetase.